The following is a 298-amino-acid chain: MAAITASMVAELRAKTDAPMMECKKALTEADGDLAKAEELLRVKLGTKAGKAAARITAEGVVASFIEGTTGALIEVNSETDFVSKNDSFIALAKAAAELVAKHNPADVEALGALPYSQESFGPTLEEVRKGLIGKIGENMSFRRFKRFSGSKLASYLHGTRIGVVVEFDGDETAAKDVAMHIAAMKPVALTSADVPAELIEKERTVAAAKAAESGKPADIAAKMVEGSVQKYLKEVSLFDQVFVKAADGKQTVGQMLKAANTTVKGFTLYVVGEGIEKKVDDFAAEVAAQVAAAKAAA.

Positions 80–83 (TDFV) are involved in Mg(2+) ion dislocation from EF-Tu.

This sequence belongs to the EF-Ts family.

Its subcellular location is the cytoplasm. In terms of biological role, associates with the EF-Tu.GDP complex and induces the exchange of GDP to GTP. It remains bound to the aminoacyl-tRNA.EF-Tu.GTP complex up to the GTP hydrolysis stage on the ribosome. This chain is Elongation factor Ts, found in Paracidovorax citrulli (strain AAC00-1) (Acidovorax citrulli).